Reading from the N-terminus, the 348-residue chain is UDP-glucose 4-epimerase (348 aa).

Position 125 (Thr-125) interacts with substrate. The active-site Proton acceptor is the Tyr-149.

It belongs to the NAD(P)-dependent epimerase/dehydratase family. NAD(+) serves as cofactor.

It carries out the reaction UDP-alpha-D-glucose = UDP-alpha-D-galactose. It participates in carbohydrate metabolism; galactose metabolism. Its pathway is glycan metabolism; exopolysaccharide biosynthesis. The sequence is that of UDP-glucose 4-epimerase (exoB) from Azospirillum brasilense.